Here is a 449-residue protein sequence, read N- to C-terminus: Exodeoxyribonuclease 7 large subunit (449 aa).

The protein belongs to the XseA family. In terms of assembly, heterooligomer composed of large and small subunits.

The protein localises to the cytoplasm. The catalysed reaction is Exonucleolytic cleavage in either 5'- to 3'- or 3'- to 5'-direction to yield nucleoside 5'-phosphates.. Its function is as follows. Bidirectionally degrades single-stranded DNA into large acid-insoluble oligonucleotides, which are then degraded further into small acid-soluble oligonucleotides. This Salmonella agona (strain SL483) protein is Exodeoxyribonuclease 7 large subunit.